The sequence spans 47 residues: Large ribosomal subunit protein bL34 (47 aa).

The interval 1–28 (MAKGKRTFQPNNRRRARVHGFRTRMRTR) is disordered.

It belongs to the bacterial ribosomal protein bL34 family.

The polypeptide is Large ribosomal subunit protein bL34 (Corynebacterium efficiens (strain DSM 44549 / YS-314 / AJ 12310 / JCM 11189 / NBRC 100395)).